The primary structure comprises 311 residues: Putative tenascin-XA (311 aa).

2 disordered regions span residues 1–47 (MEDK…EPRL) and 124–150 (LSAE…SQLS). Fibronectin type-III domains lie at 41-135 (PPEE…LAPA), 145-249 (RLSQ…SPRD), and 250-311 (LQFS…SCVH).

Expressed in the adrenal gland.

This is Putative tenascin-XA (TNXA) from Homo sapiens (Human).